The primary structure comprises 326 residues: Pyruvate dehydrogenase E1 component subunit beta (326 aa).

Glu62 contacts thiamine diphosphate.

In terms of assembly, heterodimer of an alpha and a beta chain. Thiamine diphosphate serves as cofactor.

It catalyses the reaction N(6)-[(R)-lipoyl]-L-lysyl-[protein] + pyruvate + H(+) = N(6)-[(R)-S(8)-acetyldihydrolipoyl]-L-lysyl-[protein] + CO2. Functionally, the pyruvate dehydrogenase complex catalyzes the overall conversion of pyruvate to acetyl-CoA and CO(2). It contains multiple copies of three enzymatic components: pyruvate dehydrogenase (E1), dihydrolipoamide acetyltransferase (E2) and lipoamide dehydrogenase (E3). This is Pyruvate dehydrogenase E1 component subunit beta (pdhB) from Mycoplasma genitalium (strain ATCC 33530 / DSM 19775 / NCTC 10195 / G37) (Mycoplasmoides genitalium).